Reading from the N-terminus, the 346-residue chain is Cyclin-dependent kinase 20 (346 aa).

In terms of domain architecture, Protein kinase spans 4–288; the sequence is YCILGRIGEG…ASQALLHQYF (285 aa). Residues 10–18 and lysine 33 each bind ATP; that span reads IGEGAHGIV. Aspartate 127 acts as the Proton acceptor in catalysis. The segment at 298–324 is disordered; sequence SELPIPQRPGGPAPKAHPGPPHVHDFH. The span at 303–318 shows a compositional bias: pro residues; it reads PQRPGGPAPKAHPGPP.

The protein belongs to the protein kinase superfamily. CMGC Ser/Thr protein kinase family. CDC2/CDKX subfamily. Monomer. Interacts with MAK. Interacts with TBC1D32.

The protein localises to the nucleus. Its subcellular location is the cytoplasm. It localises to the cell projection. It is found in the cilium. It catalyses the reaction L-seryl-[protein] + ATP = O-phospho-L-seryl-[protein] + ADP + H(+). It carries out the reaction L-threonyl-[protein] + ATP = O-phospho-L-threonyl-[protein] + ADP + H(+). Its function is as follows. Involved in cell growth. Activates CDK2, a kinase involved in the control of the cell cycle, by phosphorylating residue 'Thr-160'. Required for high-level Shh responses in the developing neural tube. Together with TBC1D32, controls the structure of the primary cilium by coordinating assembly of the ciliary membrane and axoneme, allowing GLI2 to be properly activated in response to SHH signaling. The protein is Cyclin-dependent kinase 20 (Cdk20) of Mus musculus (Mouse).